Consider the following 760-residue polypeptide: General transcription and DNA repair factor IIH helicase subunit XPD (760 aa).

One can recognise a Helicase ATP-binding domain in the interval 7–283 (GLLVYFPYDY…KETDEQRLRE (277 aa)). 42–49 (MPSGTGKT) lines the ATP pocket. Residues cysteine 116, cysteine 134, cysteine 155, and cysteine 190 each coordinate [4Fe-4S] cluster. A DEAH box motif is present at residues 234-237 (DEAH). The interval 438 to 637 (MDASLAIKPV…TQSRILKARL (200 aa)) is mediates interaction with MMS19. Positions 682-695 (KRFARADKRGKLPR) match the Nuclear localization signal motif.

The protein belongs to the helicase family. RAD3/XPD subfamily. Component of the 7-subunit TFIIH core complex composed of XPB/ERCC3, XPD/ERCC2, GTF2H1, GTF2H2, GTF2H3, GTF2H4 and GTF2H5, which is active in NER. The core complex associates with the 3-subunit CDK-activating kinase (CAK) module composed of CCNH/cyclin H, CDK7 and MNAT1 to form the 10-subunit holoenzyme (holo-TFIIH) active in transcription. The interaction with GTF2H2 results in the stimulation of the 5'--&gt;3' helicase activity. Component of the MMXD complex, which includes CIAO1, ERCC2, CIAO2B, MMS19 and SLC25A5. Interacts with CIAO1 and CIAO2B; the interaction WITH CIAO2B is direct. Interacts with ATF7IP. Interacts directly with MMS19. Part of TBP-based Pol II pre-initiation complex (PIC), in which Pol II core assembles with general transcription factors and other specific initiation factors including GTF2E1, GTF2E2, GTF2F1, GTF2F2, TCEA1, ERCC2, ERCC3, GTF2H2, GTF2H3, GTF2H4, GTF2H5, GTF2A1, GTF2A2, GTF2B and TBP; this large multi-subunit PIC complex mediates DNA unwinding and targets Pol II core to the transcription start site where the first phosphodiester bond forms. Mg(2+) is required as a cofactor. Requires [4Fe-4S] cluster as cofactor. ISGylated.

It localises to the nucleus. The protein resides in the cytoplasm. The protein localises to the cytoskeleton. Its subcellular location is the spindle. The catalysed reaction is Couples ATP hydrolysis with the unwinding of duplex DNA at the replication fork by translocating in the 5'-3' direction. This creates two antiparallel DNA single strands (ssDNA). The leading ssDNA polymer is the template for DNA polymerase III holoenzyme which synthesizes a continuous strand.. It catalyses the reaction ATP + H2O = ADP + phosphate + H(+). Its function is as follows. ATP-dependent 5'-3' DNA helicase, component of the general transcription and DNA repair factor IIH (TFIIH) core complex, which is involved in general and transcription-coupled nucleotide excision repair (NER) of damaged DNA and, when complexed to CDK-activating kinase (CAK), involved in transcription by RNA polymerase II. In NER, TFIIH acts by opening DNA around the lesion to allow the excision of the damaged oligonucleotide and its replacement by a new DNA fragment. The ATP-dependent helicase activity of XPD/ERCC2 is required for DNA opening. In transcription, TFIIH has an essential role in transcription initiation. When the pre-initiation complex (PIC) has been established, TFIIH is required for promoter opening and promoter escape. Phosphorylation of the C-terminal tail (CTD) of the largest subunit of RNA polymerase II by the kinase module CAK controls the initiation of transcription. XPD/ERCC2 acts by forming a bridge between CAK and the core-TFIIH complex. Involved in the regulation of vitamin-D receptor activity. As part of the mitotic spindle-associated MMXD complex it plays a role in chromosome segregation. Might have a role in aging process and could play a causative role in the generation of skin cancers. The polypeptide is General transcription and DNA repair factor IIH helicase subunit XPD (ERCC2) (Bos taurus (Bovine)).